A 1404-amino-acid polypeptide reads, in one-letter code: DNA-directed RNA polymerase subunit beta' (1404 aa).

Zn(2+)-binding residues include C70, C72, C85, and C88. Mg(2+) contacts are provided by D458, D460, and D462. Zn(2+) is bound by residues C813, C887, C894, and C897. Residues E1377–E1404 are disordered.

This sequence belongs to the RNA polymerase beta' chain family. As to quaternary structure, the RNAP catalytic core consists of 2 alpha, 1 beta, 1 beta' and 1 omega subunit. When a sigma factor is associated with the core the holoenzyme is formed, which can initiate transcription. Mg(2+) is required as a cofactor. Zn(2+) serves as cofactor.

The catalysed reaction is RNA(n) + a ribonucleoside 5'-triphosphate = RNA(n+1) + diphosphate. Its function is as follows. DNA-dependent RNA polymerase catalyzes the transcription of DNA into RNA using the four ribonucleoside triphosphates as substrates. The protein is DNA-directed RNA polymerase subunit beta' of Polaromonas naphthalenivorans (strain CJ2).